Consider the following 457-residue polypeptide: Multidrug resistance protein MdtK (457 aa).

Transmembrane regions (helical) follow at residues 11 to 31, 53 to 73, 93 to 113, 127 to 147, 160 to 180, 189 to 209, 243 to 263, 276 to 296, 314 to 334, 350 to 370, 387 to 407, and 418 to 438; these read LLAL…MGFV, IWLP…PVIA, WLAG…GYII, AVGY…FQVA, GMVM…IFIY, GGVG…LAMV, LPIA…ALLV, IALN…AAVT, AART…IFTV, VVTL…SDSI, IFYI…YILA, and PAGF…MMML.

The protein belongs to the multi antimicrobial extrusion (MATE) (TC 2.A.66.1) family. MdtK subfamily.

It is found in the cell inner membrane. In terms of biological role, multidrug efflux pump that functions probably as a Na(+)/drug antiporter. The sequence is that of Multidrug resistance protein MdtK from Escherichia coli O127:H6 (strain E2348/69 / EPEC).